Reading from the N-terminus, the 465-residue chain is MSNKMWGGRFSERPDEIMEEINVSIDVDRHLYAQDIAASKAHAAMLATQGIITASDAKNIGKGLDTILSEIGKGGFTFKRALEDIHMNVESRLSELIGPAAGRLHTARSRNDQVATDFRLYVRDVIDETDAALAAFQQALVARALEHAGTVMPGFTHLQTAQPVTFGHHLLAYVEMAARDRGRFQDARKRLNESPLGAAALAGTSFPIDRHATAKALLFDRPMANSLDAVSDRDFVLETLSAASICAVHMSRFAEEIVIWTSPLVGLIRLSDKFTTGSSIMPQKRNPDAAELVRAKTGRVIGALNGLLIVMKGLPLAYQKDMQEDKQGAMEGFAALSLAIRAMTGMVRDLAPDEAKMKAAAGEGYATATDLADWLVRTLKMPFREAHHVTGRIVAKAAEGGVALHELPLKEMQAIEPRITKDVLGVLSVESSVKSRTSFGGTAPKNVASQAKSWAKRLEKERKLG.

This sequence belongs to the lyase 1 family. Argininosuccinate lyase subfamily.

The protein localises to the cytoplasm. It catalyses the reaction 2-(N(omega)-L-arginino)succinate = fumarate + L-arginine. It functions in the pathway amino-acid biosynthesis; L-arginine biosynthesis; L-arginine from L-ornithine and carbamoyl phosphate: step 3/3. This chain is Argininosuccinate lyase, found in Bradyrhizobium diazoefficiens (strain JCM 10833 / BCRC 13528 / IAM 13628 / NBRC 14792 / USDA 110).